The sequence spans 244 residues: Uridylate kinase (244 aa).

Residue 18–21 coordinates ATP; that stretch reads KISG. Positions 26–31 are involved in allosteric activation by GTP; it reads GDQGYG. G60 lines the UMP pocket. G61 and R65 together coordinate ATP. UMP contacts are provided by residues D80 and 141 to 148; that span reads TGNPYFTT. ATP is bound by residues T168, Y174, and D177.

This sequence belongs to the UMP kinase family. Homohexamer.

Its subcellular location is the cytoplasm. It carries out the reaction UMP + ATP = UDP + ADP. Its pathway is pyrimidine metabolism; CTP biosynthesis via de novo pathway; UDP from UMP (UMPK route): step 1/1. Its activity is regulated as follows. Allosterically activated by GTP. Inhibited by UTP. Its function is as follows. Catalyzes the reversible phosphorylation of UMP to UDP. The chain is Uridylate kinase from Paracoccus denitrificans (strain Pd 1222).